A 439-amino-acid polypeptide reads, in one-letter code: L-tryptophan decarboxylase (439 aa).

This sequence belongs to the phosphatidylserine decarboxylase family.

It catalyses the reaction L-tryptophan + H(+) = tryptamine + CO2. It participates in secondary metabolite biosynthesis. In terms of biological role, L-tryptophan decarboxylase; part of the gene cluster that mediates the biosynthesis of psilocybin, a psychotropic tryptamine-derived natural product. The first step in the pathway is the decarboxylation of L-tryptophan to tryptamine by the decarboxylase psiD. PsiD does not decarboxylate phenylalanine, tyrosine, or 5-hydroxy- L -tryptophan (5-HTP). 4-hydroxy-L-tryptophan is accepted as substrate by psiD as well. The cytochrome P450 monooxygenase psiH then converts tryptamine to 4-hydroxytryptamine. The kinase psiK catalyzes the 4-O-phosphorylation step by converting 4-hydroxytryptamine into norbaeocystin. The methyltransferase psiM then catalyzes iterative methyl transfer to the amino group of norbaeocystin to yield psilocybin via a monomethylated intermediate, baeocystin. 4-hydroxy-6-methyl-l-tryptophancan also be converted the decarboxylase PsiD, kinase PsiK, and methyltransferase PsiM into respectively 6-methyl-norbaeocystin, 6-methylbaeocystin, and 6-methylpsilocybin. In Psilocybe cyanescens, this protein is L-tryptophan decarboxylase.